The following is a 214-amino-acid chain: Oxaloacetate tautomerase fahd-1, mitochondrial (214 aa).

Mg(2+)-binding residues include E65, E67, and D96.

It belongs to the FAH family. It depends on Mg(2+) as a cofactor. The cofactor is Mn(2+). As to expression, widely expressed.

The protein localises to the mitochondrion. The catalysed reaction is oxaloacetate = enol-oxaloacetate. Its function is as follows. Tautomerase that converts enol-oxaloacetate, a strong inhibitor of succinate dehydrogenase, to the physiological keto form of oxaloacetate. The sequence is that of Oxaloacetate tautomerase fahd-1, mitochondrial from Caenorhabditis elegans.